Reading from the N-terminus, the 293-residue chain is Bifunctional protein FolD (293 aa).

NADP(+) contacts are provided by residues 165 to 167 (GRS), serine 190, and isoleucine 231.

It belongs to the tetrahydrofolate dehydrogenase/cyclohydrolase family. As to quaternary structure, homodimer.

The catalysed reaction is (6R)-5,10-methylene-5,6,7,8-tetrahydrofolate + NADP(+) = (6R)-5,10-methenyltetrahydrofolate + NADPH. It carries out the reaction (6R)-5,10-methenyltetrahydrofolate + H2O = (6R)-10-formyltetrahydrofolate + H(+). It participates in one-carbon metabolism; tetrahydrofolate interconversion. Catalyzes the oxidation of 5,10-methylenetetrahydrofolate to 5,10-methenyltetrahydrofolate and then the hydrolysis of 5,10-methenyltetrahydrofolate to 10-formyltetrahydrofolate. The polypeptide is Bifunctional protein FolD (Synechococcus sp. (strain CC9311)).